A 159-amino-acid chain; its full sequence is Protein C2 (159 aa).

Positions 43–60 (KKRPPKLTWAPKKKRRKA) match the Nuclear localization signal motif. A zinc finger lies at 65-81 (CGCSYYGGIDCEDGFTH). A disordered region spans residues 102 to 139 (PNLLPPPEHNNNGDGEQNNNITNQSQPQPAESVGSPDL). Positions 110–124 (HNNNGDGEQNNNITN) are enriched in low complexity.

Belongs to the geminiviridae transcriptional activator protein family. As to quaternary structure, monomer. Suppress local silencing by interacting with and inactivating host adenosine kinase 2 (ADK2) in the cytoplasm. Interacts with and inhibits host SNF1 kinase.

It localises to the host cytoplasm. In terms of biological role, acts as a suppressor of RNA-mediated gene silencing, also known as post-transcriptional gene silencing (PTGS), a mechanism of plant viral defense that limits the accumulation of viral RNAs. Suppresses the host RNA silencing by inhibiting adenosine kinase 2 (ADK2), a kinase involved in a general methylation pathway. Also suppresses the host basal defense by interacting with and inhibiting SNF1 kinase, a key regulator of cell metabolism implicated in innate antiviral defense. Determines pathogenicity. In Tomato pseudo-curly top virus (TPCTV), this protein is Protein C2.